The chain runs to 485 residues: Cysteine--tRNA ligase (485 aa).

C27 provides a ligand contact to Zn(2+). A 'HIGH' region motif is present at residues 29-39 (ITAYDLCHIGH). Positions 208, 233, and 237 each coordinate Zn(2+). Positions 265–269 (KMSKS) match the 'KMSKS' region motif. K268 is an ATP binding site.

Belongs to the class-I aminoacyl-tRNA synthetase family. As to quaternary structure, monomer. Zn(2+) serves as cofactor.

The protein localises to the cytoplasm. The enzyme catalyses tRNA(Cys) + L-cysteine + ATP = L-cysteinyl-tRNA(Cys) + AMP + diphosphate. The chain is Cysteine--tRNA ligase from Nitratidesulfovibrio vulgaris (strain DP4) (Desulfovibrio vulgaris).